The primary structure comprises 179 residues: Large ribosomal subunit protein uL5 (179 aa).

The protein belongs to the universal ribosomal protein uL5 family. As to quaternary structure, part of the 50S ribosomal subunit; part of the 5S rRNA/L5/L18/L25 subcomplex. Contacts the 5S rRNA and the P site tRNA. Forms a bridge to the 30S subunit in the 70S ribosome.

In terms of biological role, this is one of the proteins that bind and probably mediate the attachment of the 5S RNA into the large ribosomal subunit, where it forms part of the central protuberance. In the 70S ribosome it contacts protein S13 of the 30S subunit (bridge B1b), connecting the 2 subunits; this bridge is implicated in subunit movement. Contacts the P site tRNA; the 5S rRNA and some of its associated proteins might help stabilize positioning of ribosome-bound tRNAs. The polypeptide is Large ribosomal subunit protein uL5 (Thioalkalivibrio sulfidiphilus (strain HL-EbGR7)).